Consider the following 432-residue polypeptide: Trigger factor (432 aa).

Residues 161-246 (EDRVTIDFTG…LKKVEERGLP (86 aa)) form the PPIase FKBP-type domain.

It belongs to the FKBP-type PPIase family. Tig subfamily.

It is found in the cytoplasm. The enzyme catalyses [protein]-peptidylproline (omega=180) = [protein]-peptidylproline (omega=0). Its function is as follows. Involved in protein export. Acts as a chaperone by maintaining the newly synthesized protein in an open conformation. Functions as a peptidyl-prolyl cis-trans isomerase. The sequence is that of Trigger factor from Salmonella choleraesuis (strain SC-B67).